A 349-amino-acid polypeptide reads, in one-letter code: 6-phosphogluconolactonase (349 aa).

A disordered region spans residues Leu-125 to Ala-151. The segment covering Gly-138–His-147 has biased composition (basic and acidic residues).

This sequence belongs to the cycloisomerase 2 family.

The enzyme catalyses 6-phospho-D-glucono-1,5-lactone + H2O = 6-phospho-D-gluconate + H(+). It functions in the pathway carbohydrate degradation; pentose phosphate pathway; D-ribulose 5-phosphate from D-glucose 6-phosphate (oxidative stage): step 2/3. In terms of biological role, catalyzes the hydrolysis of 6-phosphogluconolactone to 6-phosphogluconate. The polypeptide is 6-phosphogluconolactonase (pgl) (Bacillus subtilis (strain 168)).